Reading from the N-terminus, the 466-residue chain is Ribosomal protein uS12 methylthiotransferase RimO (466 aa).

The MTTase N-terminal domain maps to 16 to 127 (PKVAFAHLGC…IVDVLQRVEA (112 aa)). [4Fe-4S] cluster is bound by residues Cys-25, Cys-61, Cys-90, Cys-165, Cys-169, and Cys-172. Residues 151–380 (TTDQAVAYLK…MALQQPIAAE (230 aa)) form the Radical SAM core domain. Residues 383 to 454 (QRWVGKTVDV…IYDLTGHIVG (72 aa)) enclose the TRAM domain.

This sequence belongs to the methylthiotransferase family. RimO subfamily. [4Fe-4S] cluster is required as a cofactor.

The protein localises to the cytoplasm. The enzyme catalyses L-aspartate(89)-[ribosomal protein uS12]-hydrogen + (sulfur carrier)-SH + AH2 + 2 S-adenosyl-L-methionine = 3-methylsulfanyl-L-aspartate(89)-[ribosomal protein uS12]-hydrogen + (sulfur carrier)-H + 5'-deoxyadenosine + L-methionine + A + S-adenosyl-L-homocysteine + 2 H(+). Its function is as follows. Catalyzes the methylthiolation of an aspartic acid residue of ribosomal protein uS12. This Synechococcus sp. (strain CC9902) protein is Ribosomal protein uS12 methylthiotransferase RimO.